A 1684-amino-acid polypeptide reads, in one-letter code: Latrophilin Cirl (1684 aa).

Over 1 to 765 the chain is Extracellular; it reads MASNNYIQIM…LFTMFDGNMR (765 aa). Positions 21–110 constitute an SUEL-type lectin domain; that stretch reads ACEGKKLTIE…KYLEAHYQCV (90 aa). N-linked (GlcNAc...) asparagine glycosylation is found at Asn138, Asn251, Asn297, and Asn336. Residues 181 to 300 are disordered; the sequence is PPATHATPPG…GPSVSSNGSA (120 aa). 2 stretches are compositionally biased toward polar residues: residues 250–260 and 278–300; these read SNATAPSNTRI and KSSPNRTPGTAASGPSVSSNGSA. The tract at residues 370–391 is disordered; that stretch reads SFDEDDEEMAGTSTTTPMSTSS. Residues 381 to 391 show a composition bias toward low complexity; it reads TSTTTPMSTSS. N-linked (GlcNAc...) asparagine glycosylation is found at Asn396, Asn653, Asn701, and Asn728. Residues 559-752 enclose the GAIN-B domain; sequence RSVVQKVKNI…AILMDVVDEH (194 aa). 2 disulfide bridges follow: Cys707/Cys734 and Cys722/Cys736. A GPS region spans residues 707–752; the sequence is CVFWNYIDHAWSANGCSLESTNRTHSVCSCNHLTNFAILMDVVDEH. A helical membrane pass occupies residues 766–786; the sequence is IFIYISIAICVVFIVIALLTL. Over 787–799 the chain is Cytoplasmic; the sequence is KLFNGVFVKSART. The helical transmembrane segment at 800 to 820 threads the bilayer; that stretch reads SIYINIYICLLAIELLFLLGI. Topologically, residues 821 to 826 are extracellular; the sequence is EQTETS. The helical transmembrane segment at 827–847 threads the bilayer; that stretch reads IFCGFITVFLHCAILSGTSWF. Topologically, residues 848–873 are cytoplasmic; sequence CYEAFHSYSTLTSDELLLEVDQTPKV. A helical transmembrane segment spans residues 874–894; it reads NCYYLLSYGLSLSVVAISLVI. The Extracellular portion of the chain corresponds to 895 to 918; it reads NPSTYTQNDYCVLMEANAVFYATF. The chain crosses the membrane as a helical span at residues 919–939; sequence VAPVLIFFMAAIGYTFLSWII. Topologically, residues 940–966 are cytoplasmic; sequence MCRKSRTGLKTKEHTRLATVRFDIRCS. Residues 967–987 form a helical membrane-spanning segment; that stretch reads FVFFLLLSAVWCSAYFYLRGA. The Extracellular segment spans residues 988-994; sequence KMDEDVT. Residues 995-1015 traverse the membrane as a helical segment; the sequence is GIYGYNFICFNTLLGLYIFVF. At 1016-1684 the chain is on the cytoplasmic side; sequence HCIQNEKIRR…VRCYLEPLAK (669 aa). The interval 1080–1100 is disordered; that stretch reads PLGTNDDAHDEQQQQQHMSAT. Residues Ser1156, Ser1247, and Ser1254 each carry the phosphoserine modification. Disordered stretches follow at residues 1228-1255, 1270-1353, 1441-1520, and 1587-1669; these read KPNSQHGKKKRGGVGAIPASPSGSLHSR, KTKP…APPP, SRYG…LPPQ, and SMRG…SAML. Positions 1298–1314 are enriched in low complexity; the sequence is QQQQQLRQQRQQQQQQL. Ser1315 and Ser1316 each carry phosphoserine. Residues 1328–1348 are compositionally biased toward low complexity; the sequence is LHLQHQQQQQQQRRAGGQQQL. A compositionally biased stretch (polar residues) spans 1455–1466; that stretch reads RNQQQQQHSLAQ. 2 stretches are compositionally biased toward acidic residues: residues 1476–1489 and 1499–1512; these read DEDDDEDEDDEETT and CDEEEEDEESDMED. Low complexity predominate over residues 1631 to 1654; that stretch reads QQLQKLSPQSTTSSSSHTSHSNPH.

This sequence belongs to the G-protein coupled receptor 2 family. LN-TM7 subfamily. Forms a heterodimer, consisting of a large extracellular region non-covalently linked to a seven-transmembrane moiety. In terms of processing, proteolytically cleaved into 2 subunits, an extracellular subunit and a seven-transmembrane subunit.

It localises to the cell membrane. In Drosophila persimilis (Fruit fly), this protein is Latrophilin Cirl.